Reading from the N-terminus, the 581-residue chain is Serine/threonine-protein kinase SSN3 (581 aa).

The disordered stretch occupies residues 34–57; that stretch reads LWSQQQQQQLLDTKGSASTSKSPM. Residues 48 to 57 show a composition bias toward polar residues; the sequence is GSASTSKSPM. Residues 85–475 enclose the Protein kinase domain; that stretch reads YEIIGYIAAG…AIDALEHEYF (391 aa). ATP contacts are provided by residues 91–99 and Lys-195; that span reads IAAGTYGKV. Asp-298 (proton acceptor) is an active-site residue.

The protein belongs to the protein kinase superfamily. CMGC Ser/Thr protein kinase family. CDC2/CDKX subfamily. Component of the SRB8-11 complex, a regulatory module of the Mediator complex. Mg(2+) is required as a cofactor.

Its subcellular location is the nucleus. It catalyses the reaction L-seryl-[protein] + ATP = O-phospho-L-seryl-[protein] + ADP + H(+). The catalysed reaction is L-threonyl-[protein] + ATP = O-phospho-L-threonyl-[protein] + ADP + H(+). The enzyme catalyses [DNA-directed RNA polymerase] + ATP = phospho-[DNA-directed RNA polymerase] + ADP + H(+). Component of the SRB8-11 complex. The SRB8-11 complex is a regulatory module of the Mediator complex which is itself involved in regulation of basal and activated RNA polymerase II-dependent transcription. The SRB8-11 complex may be involved in the transcriptional repression of a subset of genes regulated by Mediator. It may inhibit the association of the Mediator complex with RNA polymerase II to form the holoenzyme complex. The SRB8-11 complex phosphorylates the C-terminal domain (CTD) of the largest subunit of RNA polymerase II. The protein is Serine/threonine-protein kinase SSN3 (SSN3) of Eremothecium gossypii (strain ATCC 10895 / CBS 109.51 / FGSC 9923 / NRRL Y-1056) (Yeast).